The following is a 163-amino-acid chain: UPF0763 protein CJJ81176_1011 (163 aa).

This sequence belongs to the UPF0763 family.

The chain is UPF0763 protein CJJ81176_1011 from Campylobacter jejuni subsp. jejuni serotype O:23/36 (strain 81-176).